A 381-amino-acid polypeptide reads, in one-letter code: Alkanesulfonate monooxygenase (381 aa).

Belongs to the SsuD family. As to quaternary structure, homotetramer.

The catalysed reaction is an alkanesulfonate + FMNH2 + O2 = an aldehyde + FMN + sulfite + H2O + 2 H(+). Catalyzes the desulfonation of aliphatic sulfonates. The chain is Alkanesulfonate monooxygenase from Escherichia coli O1:K1 / APEC.